The chain runs to 175 residues: Lactobacillus up-regulated protein (175 aa).

A signal peptide spans 1–18 (MRSIFLAVLGLMATSSLA). N-linked (GlcNAc...) asparagine glycosylation occurs at Asn-59.

This is Lactobacillus up-regulated protein (lbuA) from Emericella nidulans (strain FGSC A4 / ATCC 38163 / CBS 112.46 / NRRL 194 / M139) (Aspergillus nidulans).